The sequence spans 82 residues: RNA-binding protein Hfq (82 aa).

A Sm domain is found at 11-71 (DTFLNHVRKT…ISTIMPGAPI (61 aa)).

It belongs to the Hfq family. As to quaternary structure, homohexamer.

Its function is as follows. RNA chaperone that binds small regulatory RNA (sRNAs) and mRNAs to facilitate mRNA translational regulation in response to envelope stress, environmental stress and changes in metabolite concentrations. Also binds with high specificity to tRNAs. This chain is RNA-binding protein Hfq, found in Rhodopseudomonas palustris (strain BisA53).